The primary structure comprises 644 residues: Threonine--tRNA ligase (644 aa).

The TGS domain maps to 1–61 (MNVTIEGQVF…ADTTTIEPVF (61 aa)). Residues 241 to 532 (DHRKLGQQLD…LTEHFAGAFP (292 aa)) form a catalytic region. 3 residues coordinate Zn(2+): Cys333, His384, and His509.

Belongs to the class-II aminoacyl-tRNA synthetase family. In terms of assembly, homodimer. The cofactor is Zn(2+).

The protein localises to the cytoplasm. It carries out the reaction tRNA(Thr) + L-threonine + ATP = L-threonyl-tRNA(Thr) + AMP + diphosphate + H(+). In terms of biological role, catalyzes the attachment of threonine to tRNA(Thr) in a two-step reaction: L-threonine is first activated by ATP to form Thr-AMP and then transferred to the acceptor end of tRNA(Thr). Also edits incorrectly charged L-seryl-tRNA(Thr). This is Threonine--tRNA ligase from Nitratidesulfovibrio vulgaris (strain DSM 19637 / Miyazaki F) (Desulfovibrio vulgaris).